An 89-amino-acid chain; its full sequence is Small ribosomal subunit protein bS20 (89 aa).

The disordered stretch occupies residues 1 to 26; that stretch reads MANSAQARKRARQADGQRSHNASLRS.

It belongs to the bacterial ribosomal protein bS20 family.

Functionally, binds directly to 16S ribosomal RNA. This chain is Small ribosomal subunit protein bS20, found in Dechloromonas aromatica (strain RCB).